Reading from the N-terminus, the 132-residue chain is Small ribosomal subunit protein uS8 (132 aa).

This sequence belongs to the universal ribosomal protein uS8 family. Part of the 30S ribosomal subunit. Contacts proteins S5 and S12.

Its function is as follows. One of the primary rRNA binding proteins, it binds directly to 16S rRNA central domain where it helps coordinate assembly of the platform of the 30S subunit. The protein is Small ribosomal subunit protein uS8 (rpsH) of Caldanaerobacter subterraneus subsp. tengcongensis (strain DSM 15242 / JCM 11007 / NBRC 100824 / MB4) (Thermoanaerobacter tengcongensis).